We begin with the raw amino-acid sequence, 269 residues long: Tryptophan synthase alpha chain (269 aa).

Catalysis depends on proton acceptor residues glutamate 49 and aspartate 60.

The protein belongs to the TrpA family. As to quaternary structure, tetramer of two alpha and two beta chains.

It carries out the reaction (1S,2R)-1-C-(indol-3-yl)glycerol 3-phosphate + L-serine = D-glyceraldehyde 3-phosphate + L-tryptophan + H2O. It functions in the pathway amino-acid biosynthesis; L-tryptophan biosynthesis; L-tryptophan from chorismate: step 5/5. The alpha subunit is responsible for the aldol cleavage of indoleglycerol phosphate to indole and glyceraldehyde 3-phosphate. This Pseudomonas putida (strain ATCC 700007 / DSM 6899 / JCM 31910 / BCRC 17059 / LMG 24140 / F1) protein is Tryptophan synthase alpha chain.